Here is a 548-residue protein sequence, read N- to C-terminus: SH2/SH3 adapter protein dreadlocks (548 aa).

Disordered regions lie at residues 12–37 (IPDS…QHQN), 57–92 (QVPV…TASS), and 113–146 (GSGS…MKHG). Positions 20 to 37 (QQYPQQQQHPPQLPQHQN) are enriched in low complexity. Positions 113–122 (GSGSANGSGS) are enriched in gly residues. The segment covering 123 to 135 (GNSSSGSAAGNAG) has biased composition (low complexity). The SH3 1 domain maps to 150 to 209 (DDVCYVVAKYDYAAQGAQELDLRKNERYLLLDDSKHWWRVQNSRNQSGYVPSNYVKKEKP). Positions 219–247 (VKKGSGSKTLPNCSPSRQVESPTMSRRLP) are disordered. The segment covering 227 to 242 (TLPNCSPSRQVESPTM) has biased composition (polar residues). 2 consecutive SH3 domains span residues 252–311 (EAIG…EDCD) and 324–386 (NVLD…ELND). Residues 398-442 (SAGNGNGGGSNGGAGGGGGNDSMERRNEGNKPAAQSSGQPIERPN) are disordered. Residues 401–417 (NGNGGGSNGGAGGGGGN) show a composition bias toward gly residues. The SH2 domain occupies 448–542 (WYYGAITRSQ…GEKLYLVRSL (95 aa)).

As to quaternary structure, interacts (via SH2 and SH3 domains) with Dscam1 (via cytoplasmic domain); the interaction is direct and requires Dscam1 to be phosphorylated. Interacts (via SH2 and SH3 domains) with InR/Insulin-like receptor (via C-terminal cytoplasmic region); the interaction requires InR kinase activity, probably for autophosphorylation stimulated by insulin signaling. Interacts with Ptp61F (via C-terminus); this interaction is independent of insulin stimulation. Interacts (via SH3 domain 2) with Pak (via N-terminal PXXP motif). Phosphorylated by Src42A and possibly by other tyrosine kinases. Constitutively dephosphorylated by its binding partner Ptp61F.

Its subcellular location is the perikaryon. The protein localises to the cell projection. The protein resides in the axon. It is found in the growth cone. Adapter protein that links cell surface receptor tyrosine phosphorylation to downstream signaling pathways and effectors, many of which are involved in regulation of the actin cytoskeleton. Recruited by Dscam1/Down syndrome cell adhesion molecule homolog and InR/insulin-like receptor. Recruits Pak to membranes, probably when dock/dreadlocks is associated with activated receptors. Required for guidance and targeting of photoreceptor (R cell) axon projections but not for axon outgrowth, differentiation or target induction in the developing eye. As part of a signaling pathway that involves the lbm/late bloomer protein, involved in synapse formation of the RP3 motorneuron at the muscle 7/6 cleft, probably by stimulating axon defasciculation from other SNb neurons. The chain is SH2/SH3 adapter protein dreadlocks from Drosophila melanogaster (Fruit fly).